A 363-amino-acid chain; its full sequence is tRNA N6-adenosine threonylcarbamoyltransferase (363 aa).

The Fe cation site is built by His138, His142, and Tyr159. Residues 159 to 163 (YVSGG), Asp191, Asp212, and Ser295 contribute to the substrate site. Asp323 provides a ligand contact to Fe cation.

Belongs to the KAE1 / TsaD family. Fe(2+) serves as cofactor.

It localises to the cytoplasm. The catalysed reaction is L-threonylcarbamoyladenylate + adenosine(37) in tRNA = N(6)-L-threonylcarbamoyladenosine(37) in tRNA + AMP + H(+). Its function is as follows. Required for the formation of a threonylcarbamoyl group on adenosine at position 37 (t(6)A37) in tRNAs that read codons beginning with adenine. Is probably involved in the transfer of the threonylcarbamoyl moiety of threonylcarbamoyl-AMP (TC-AMP) to the N6 group of A37. This is tRNA N6-adenosine threonylcarbamoyltransferase from Hyperthermus butylicus (strain DSM 5456 / JCM 9403 / PLM1-5).